Reading from the N-terminus, the 311-residue chain is Porphobilinogen deaminase (311 aa).

S-(dipyrrolylmethanemethyl)cysteine is present on C241.

It belongs to the HMBS family. As to quaternary structure, monomer. Dipyrromethane serves as cofactor.

It catalyses the reaction 4 porphobilinogen + H2O = hydroxymethylbilane + 4 NH4(+). It functions in the pathway porphyrin-containing compound metabolism; protoporphyrin-IX biosynthesis; coproporphyrinogen-III from 5-aminolevulinate: step 2/4. Its function is as follows. Tetrapolymerization of the monopyrrole PBG into the hydroxymethylbilane pre-uroporphyrinogen in several discrete steps. This is Porphobilinogen deaminase from Carboxydothermus hydrogenoformans (strain ATCC BAA-161 / DSM 6008 / Z-2901).